We begin with the raw amino-acid sequence, 85 residues long: Putative transmembrane protein ORF85 (85 aa).

The next 2 membrane-spanning stretches (helical) occupy residues Phe-12 to Ser-32 and Leu-44 to Ile-64.

It is found in the host membrane. In Acidianus convivator (ABV), this protein is Putative transmembrane protein ORF85.